A 390-amino-acid polypeptide reads, in one-letter code: S-adenosylmethionine synthase 1 (390 aa).

E9 is a Mg(2+) binding site. H15 is an ATP binding site. E43 serves as a coordination point for K(+). E56 and Q99 together coordinate L-methionine. Residues 167–169, 235–238, D246, 252–253, A269, K273, and K277 contribute to the ATP site; these read DGK, SGRF, and RK. Residue D246 coordinates L-methionine. Position 277 (K277) interacts with L-methionine.

This sequence belongs to the AdoMet synthase family. In terms of assembly, homotetramer. The cofactor is Mn(2+). Mg(2+) is required as a cofactor. Requires Co(2+) as cofactor. It depends on K(+) as a cofactor.

It is found in the cytoplasm. The catalysed reaction is L-methionine + ATP + H2O = S-adenosyl-L-methionine + phosphate + diphosphate. It participates in amino-acid biosynthesis; S-adenosyl-L-methionine biosynthesis; S-adenosyl-L-methionine from L-methionine: step 1/1. Catalyzes the formation of S-adenosylmethionine from methionine and ATP. The reaction comprises two steps that are both catalyzed by the same enzyme: formation of S-adenosylmethionine (AdoMet) and triphosphate, and subsequent hydrolysis of the triphosphate. This is S-adenosylmethionine synthase 1 (SAM1) from Actinidia chinensis var. chinensis (Chinese soft-hair kiwi).